The primary structure comprises 512 residues: Glucagon-like peptide 2 receptor (512 aa).

Residues 1-135 are Extracellular-facing; the sequence is MRRLWGPGTP…KQNVDHYHHT (135 aa). Intrachain disulfides connect C43–C65, C56–C97, and C78–C119. N-linked (GlcNAc...) asparagine glycosylation occurs at N73. Residues 136-160 form a helical membrane-spanning segment; that stretch reads LLSTLQLMYTVGYSLSLISLFLALT. The Cytoplasmic portion of the chain corresponds to 161 to 172; that stretch reads LFLFLRKLHCTR. Residues 173-197 form a helical membrane-spanning segment; it reads NYIHMNLFASFILRALVVLVKDMVF. Residues 198–223 lie on the Extracellular side of the membrane; sequence YNSYSRRPDSESGWMSYLSEISASCR. Residues 224–247 form a helical membrane-spanning segment; the sequence is SVQVLLHYFVGTNHLWLLVEGLYL. At 248 to 261 the chain is on the cytoplasmic side; sequence HALLEPTVLPERRL. The helical transmembrane segment at 262-283 threads the bilayer; it reads WPKYLVVGWAFPMLFVIPWIFV. Residues 284 to 301 are Extracellular-facing; the sequence is RASLENTGCWAVNENKKI. The helical transmembrane segment at 302 to 324 threads the bilayer; it reads WWIIRGPILLCVTVNFFIFLKIL. Residues 325–348 are Cytoplasmic-facing; sequence KLLISKFRAHQMCFRDYKYRLAKS. Residues 349 to 367 traverse the membrane as a helical segment; the sequence is TLLLILLMGVHEFLFTFFT. At 368–379 the chain is on the extracellular side; it reads DDQVQGFSRLIR. A helical transmembrane segment spans residues 380 to 400; it reads LFIQLTLSSFHGFLVALQYGF. The Cytoplasmic portion of the chain corresponds to 401-512; the sequence is ASREVKAELR…MEEILEESEI (112 aa). Residues 458–494 are disordered; the sequence is SGVSSHLTAGNLRDHGAQPHRGRGAWPRASSLSESSE.

It belongs to the G-protein coupled receptor 2 family.

It is found in the cell membrane. Functionally, this is a receptor for glucagon-like peptide 2. The activity of this receptor is mediated by G proteins which activate adenylyl cyclase. This is Glucagon-like peptide 2 receptor (Glp2r) from Mus musculus (Mouse).